Here is a 122-residue protein sequence, read N- to C-terminus: Protein U68 (122 aa).

It belongs to the herpesviridae UL96 family.

In Elephas maximus (Indian elephant), this protein is Protein U68.